The sequence spans 498 residues: Putative BTB/POZ domain-containing protein L788 (498 aa).

The region spanning 28-99 is the BTB domain; it reads TDIILVLEDD…FYGQKIKSGN (72 aa).

The protein belongs to the mimivirus BTB/WD family.

The sequence is that of Putative BTB/POZ domain-containing protein L788 from Acanthamoeba polyphaga (Amoeba).